Consider the following 308-residue polypeptide: Olfactory receptor 4N5 (308 aa).

Residues 1–25 are Extracellular-facing; sequence METQNLTVVTEFILLGLTQSQDAQL. Asn5 carries N-linked (GlcNAc...) asparagine glycosylation. A helical transmembrane segment spans residues 26 to 49; the sequence is LVFVLVLIFYLIILPGNFLIIFTI. At 50-57 the chain is on the cytoplasmic side; the sequence is KSDPGLTA. Residues 58–79 traverse the membrane as a helical segment; that stretch reads PLYFFLGNLALLDASYSFIVVP. At 80 to 100 the chain is on the extracellular side; that stretch reads RMLVDFLSEKKVISYRSCITQ. Residues Cys97 and Cys189 are joined by a disulfide bond. The chain crosses the membrane as a helical span at residues 101–120; sequence LFFLHFLGAGEMFLLVVMAF. The Cytoplasmic portion of the chain corresponds to 121–139; that stretch reads DRYIAICRPLHYSTIMNPR. The helical transmembrane segment at 140–158 threads the bilayer; sequence ACYALSLVLWLGGFIHSIV. Topologically, residues 159–195 are extracellular; that stretch reads QVALILHLPFCGPNQLDNFFCDVPQVIKLACTNTFVV. Residues 196-219 form a helical membrane-spanning segment; it reads ELLMVSNSGLLSLLCFLGLLASYA. Over 220–235 the chain is Cytoplasmic; it reads VILCRIREHSSEGKSK. Residues 236 to 258 traverse the membrane as a helical segment; sequence AISTCTTHIIIIFLMFGPAIFIY. The Extracellular segment spans residues 259–269; it reads TCPFQAFPADK. A helical transmembrane segment spans residues 270–289; it reads VVSLFHTVIFPLMNPVIYTL. Residues 290-308 lie on the Cytoplasmic side of the membrane; the sequence is RNQEVKASMRKLLSQHMFC.

This sequence belongs to the G-protein coupled receptor 1 family.

It localises to the cell membrane. Its function is as follows. Odorant receptor. This chain is Olfactory receptor 4N5 (OR4N5), found in Homo sapiens (Human).